We begin with the raw amino-acid sequence, 268 residues long: Bis(5'-nucleosyl)-tetraphosphatase, symmetrical (268 aa).

It belongs to the Ap4A hydrolase family.

The catalysed reaction is P(1),P(4)-bis(5'-adenosyl) tetraphosphate + H2O = 2 ADP + 2 H(+). In terms of biological role, hydrolyzes diadenosine 5',5'''-P1,P4-tetraphosphate to yield ADP. In Nitrosomonas europaea (strain ATCC 19718 / CIP 103999 / KCTC 2705 / NBRC 14298), this protein is Bis(5'-nucleosyl)-tetraphosphatase, symmetrical.